Consider the following 342-residue polypeptide: GTPase Obg (342 aa).

Residues 1-159 (MKFLDLCKVY…RTIWLRLKLI (159 aa)) form the Obg domain. In terms of domain architecture, OBG-type G spans 160–327 (ADAGLLGLPN…VLRALWAEID (168 aa)). Residues 166–173 (GLPNAGKS), 191–195 (FTTLV), 212–215 (DIPG), 279–282 (NKID), and 308–310 (SGV) contribute to the GTP site. Residues Ser173 and Thr193 each coordinate Mg(2+).

The protein belongs to the TRAFAC class OBG-HflX-like GTPase superfamily. OBG GTPase family. As to quaternary structure, monomer. It depends on Mg(2+) as a cofactor.

The protein localises to the cytoplasm. Its function is as follows. An essential GTPase which binds GTP, GDP and possibly (p)ppGpp with moderate affinity, with high nucleotide exchange rates and a fairly low GTP hydrolysis rate. Plays a role in control of the cell cycle, stress response, ribosome biogenesis and in those bacteria that undergo differentiation, in morphogenesis control. This chain is GTPase Obg, found in Cereibacter sphaeroides (strain KD131 / KCTC 12085) (Rhodobacter sphaeroides).